Here is a 245-residue protein sequence, read N- to C-terminus: UPF0246 protein Cgl1995/cg2186 (245 aa).

Belongs to the UPF0246 family.

The sequence is that of UPF0246 protein Cgl1995/cg2186 from Corynebacterium glutamicum (strain ATCC 13032 / DSM 20300 / JCM 1318 / BCRC 11384 / CCUG 27702 / LMG 3730 / NBRC 12168 / NCIMB 10025 / NRRL B-2784 / 534).